Reading from the N-terminus, the 298-residue chain is Ribosomal protein L11 methyltransferase (298 aa).

Positions 139, 163, 185, and 232 each coordinate S-adenosyl-L-methionine.

This sequence belongs to the methyltransferase superfamily. PrmA family.

The protein localises to the cytoplasm. The enzyme catalyses L-lysyl-[protein] + 3 S-adenosyl-L-methionine = N(6),N(6),N(6)-trimethyl-L-lysyl-[protein] + 3 S-adenosyl-L-homocysteine + 3 H(+). Functionally, methylates ribosomal protein L11. This is Ribosomal protein L11 methyltransferase from Gloeothece citriformis (strain PCC 7424) (Cyanothece sp. (strain PCC 7424)).